Reading from the N-terminus, the 218-residue chain is Imidazole glycerol phosphate synthase subunit HisH (218 aa).

The Glutamine amidotransferase type-1 domain occupies 5–213; sequence RLAVIDYEAG…VEFVARCSPL (209 aa). The active-site Nucleophile is the Cys-83. Active-site residues include His-188 and Glu-190.

Heterodimer of HisH and HisF.

It localises to the cytoplasm. The enzyme catalyses 5-[(5-phospho-1-deoxy-D-ribulos-1-ylimino)methylamino]-1-(5-phospho-beta-D-ribosyl)imidazole-4-carboxamide + L-glutamine = D-erythro-1-(imidazol-4-yl)glycerol 3-phosphate + 5-amino-1-(5-phospho-beta-D-ribosyl)imidazole-4-carboxamide + L-glutamate + H(+). The catalysed reaction is L-glutamine + H2O = L-glutamate + NH4(+). The protein operates within amino-acid biosynthesis; L-histidine biosynthesis; L-histidine from 5-phospho-alpha-D-ribose 1-diphosphate: step 5/9. IGPS catalyzes the conversion of PRFAR and glutamine to IGP, AICAR and glutamate. The HisH subunit catalyzes the hydrolysis of glutamine to glutamate and ammonia as part of the synthesis of IGP and AICAR. The resulting ammonia molecule is channeled to the active site of HisF. This chain is Imidazole glycerol phosphate synthase subunit HisH, found in Synechococcus sp. (strain JA-2-3B'a(2-13)) (Cyanobacteria bacterium Yellowstone B-Prime).